A 580-amino-acid chain; its full sequence is Multidrug resistance-like ATP-binding protein MdlB (580 aa).

The 286-residue stretch at 25–310 (IILAFFLLLS…ITIQQSILQQ (286 aa)) folds into the ABC transmembrane type-1 domain. Helical transmembrane passes span 26–46 (ILAF…PILI), 61–81 (FQLI…AVFF), 142–162 (VGPT…AMFT), 165–185 (WHMA…MSIY), and 258–278 (LLSA…SIGV). The 235-residue stretch at 341-575 (INIKNLSFKY…KGFYWKMYNF (235 aa)) folds into the ABC transporter domain. Residue 375–382 (GQTGSGKS) coordinates ATP.

Belongs to the ABC transporter superfamily. Drug exporter-2 (TC 3.A.1.117) family.

It is found in the cell membrane. The catalysed reaction is ATP + H2O + xenobioticSide 1 = ADP + phosphate + xenobioticSide 2.. The protein is Multidrug resistance-like ATP-binding protein MdlB (mdlB) of Buchnera aphidicola subsp. Schizaphis graminum (strain Sg).